We begin with the raw amino-acid sequence, 334 residues long: Leucine-rich repeat-containing protein 26 (334 aa).

The N-terminal stretch at M1 to A26 is a signal peptide. The Extracellular segment spans residues Q27–D261. Residues P34 to L71 form the LRRNT domain. Cystine bridges form between C43–C49 and C47–C57. LRR repeat units follow at residues R72 to G93, A96 to G117, A120 to P141, A144 to P167, and L168 to L190. A glycan (N-linked (GlcNAc...) asparagine) is linked at N147. An LRRCT domain is found at N201–Q255. Disulfide bonds link C205–C231 and C207–C253. A helical transmembrane segment spans residues L262 to A282. Residues L283–A334 lie on the Cytoplasmic side of the membrane. The segment at R298–A334 is disordered. A compositionally biased stretch (pro residues) spans P304 to D313. Residues A320 to A334 are compositionally biased toward low complexity.

Interacts with KCNMA1. In terms of tissue distribution, isoform 1 is expressed highly in normal prostate and salivary gland, very weakly in colon, pancreas, and intestine, and not at all in other tissues. Isoform 1 is expressed highly in many cancer cell lines and in breast cancer, pancreatic cancer and colon cancer. Isoform 2 is expressed in cancer cell lines.

Its subcellular location is the cell membrane. It localises to the cytoplasm. The protein localises to the cytoskeleton. Its function is as follows. Auxiliary protein of the large-conductance, voltage and calcium-activated potassium channel (BK alpha). Required for the conversion of BK alpha channels from a high-voltage to a low-voltage activated channel type in non-excitable cells. These are characterized by negative membrane voltages and constant low levels of calcium. The polypeptide is Leucine-rich repeat-containing protein 26 (LRRC26) (Homo sapiens (Human)).